The following is a 65-amino-acid chain: Small ribosomal subunit protein bS21 (65 aa).

The protein belongs to the bacterial ribosomal protein bS21 family.

This is Small ribosomal subunit protein bS21 from Chlorobium chlorochromatii (strain CaD3).